A 311-amino-acid polypeptide reads, in one-letter code: MKRVHVIDSHTAGEPTRLVMEGMPALSGRTIAEKCDDFRDNHDAWRRAIMLEPRGHDVLVGALYCAPESSDASCGVIFFNNSGYLGMCGHGTIGLVASLHHLGQLTPGCHKIDTPAGPVSATLHDDGAVTVRNVLSYRHRRRVPVEVPGYGTVHGDIAWGGNWFFLVSDHDMTLELDNVEALTDYTWAIRQALEAQSITGENGGVIDHIELFCDDREADSRNFVLCPGKAYDRSPCGTGTSAKLACLAADGKLAPGQVWTQASICGSRFEAFYEREGDGIRPSIKGRAYLSADATLLIDERDPFAWGIASP.

The Proton acceptor role is filled by Cys88. Substrate is bound by residues 89-90, His208, and Asp232; that span reads GH. The Proton donor role is filled by Cys236. Residue 237–238 coordinates substrate; it reads GT.

This sequence belongs to the proline racemase family.

It carries out the reaction trans-4-hydroxy-L-proline = cis-4-hydroxy-D-proline. Functionally, catalyzes the epimerization of trans-4-hydroxy-L-proline (t4LHyp) to cis-4-hydroxy-D-proline (c4DHyp). Is likely involved in a degradation pathway that converts t4LHyp to alpha-ketoglutarate. Displays no proline racemase activity. This is 4-hydroxyproline 2-epimerase from Chromohalobacter salexigens (strain ATCC BAA-138 / DSM 3043 / CIP 106854 / NCIMB 13768 / 1H11).